The chain runs to 210 residues: Lysine N-acyltransferase MbtK (210 aa).

Position 130 (histidine 130) interacts with substrate. Aspartate 168 functions as the Proton acceptor in the catalytic mechanism.

Belongs to the lysine N-acyltransferase MbtK family. In terms of assembly, monomer.

It participates in siderophore biosynthesis; mycobactin biosynthesis. Acyltransferase required for the direct transfer of medium- to long-chain fatty acyl moieties from a carrier protein (MbtL) on to the epsilon-amino group of lysine residue in the mycobactin core. The chain is Lysine N-acyltransferase MbtK (mbtK) from Mycobacterium tuberculosis (strain CDC 1551 / Oshkosh).